The sequence spans 1576 residues: DExH-box ATP-dependent RNA helicase DExH2 (1576 aa).

The R3H domain maps to 15-78 (EATGAWATKV…ERRLSLFKGD (64 aa)). In terms of domain architecture, Helicase ATP-binding spans 227 to 396 (ISAVESNQVV…FGGCPVVRVP (170 aa)). Position 240–247 (240–247 (GETGCGKT)) interacts with ATP. Residues 343-346 (DEIH) carry the DEIH box motif. Positions 561–735 (LIVKLMKKIC…ELCLQVKMLD (175 aa)) constitute a Helicase C-terminal domain. 3 disordered regions span residues 1137-1165 (ATSP…MGSK), 1177-1223 (MEES…SLNN), and 1260-1576 (DMGN…PSDQ). Residues 1281 to 1301 (PNSANSMDLGNMEENTPSDLA) are compositionally biased toward polar residues. The segment covering 1305 to 1319 (KKKEPKSVSKLDLGS) has biased composition (basic and acidic residues). The PH1 signature appears at 1349-1360 (KQPEKKRSRSKK). The span at 1352-1363 (EKKRSRSKKRKS) shows a compositional bias: basic residues. A compositionally biased stretch (polar residues) spans 1381–1412 (ANENEQTEPKSANNLDLGNMKENTPSDLANEN). Positions 1454–1465 (KQPKKKRSRSKK) match the PH2 motif. Positions 1455 to 1467 (QPKKKRSRSKKCK) are enriched in basic residues. The segment covering 1490 to 1508 (EQKDPESVNRLDPGKEKES) has biased composition (basic and acidic residues). Residues 1509–1524 (IPSNLVSGNEQPDSNT) show a composition bias toward polar residues. A compositionally biased stretch (basic residues) spans 1528-1537 (KKPKKKKRKL). The Nuclear localization signal motif lies at 1530-1537 (PKKKKRKL). Positions 1540–1562 (NFDSVNNMEEKMPSTNVLSQGNK) are enriched in polar residues.

It belongs to the DExH box helicase family. Homodimer.

The protein localises to the nucleus. The catalysed reaction is ATP + H2O = ADP + phosphate + H(+). May function as an ATP-dependent RNA/DNA helicase. Binds DNA in vitro in a non-specific manner. The sequence is that of DExH-box ATP-dependent RNA helicase DExH2 from Arabidopsis thaliana (Mouse-ear cress).